The following is a 495-amino-acid chain: UDP-N-acetylmuramoyl-L-alanyl-D-glutamate--2,6-diaminopimelate ligase (495 aa).

Residues L28, S30, and 45–47 (HRV) each bind UDP-N-acetyl-alpha-D-muramoyl-L-alanyl-D-glutamate. 117–123 (GTNGKTT) is an ATP binding site. UDP-N-acetyl-alpha-D-muramoyl-L-alanyl-D-glutamate contacts are provided by residues N158, 159–160 (TT), S186, Q192, and R194. N6-carboxylysine is present on K226. Meso-2,6-diaminopimelate is bound by residues R394, 418-421 (DNPR), G469, and E473. Residues 418–421 (DNPR) carry the Meso-diaminopimelate recognition motif motif.

This sequence belongs to the MurCDEF family. MurE subfamily. The cofactor is Mg(2+). Post-translationally, carboxylation is probably crucial for Mg(2+) binding and, consequently, for the gamma-phosphate positioning of ATP.

It is found in the cytoplasm. The catalysed reaction is UDP-N-acetyl-alpha-D-muramoyl-L-alanyl-D-glutamate + meso-2,6-diaminopimelate + ATP = UDP-N-acetyl-alpha-D-muramoyl-L-alanyl-gamma-D-glutamyl-meso-2,6-diaminopimelate + ADP + phosphate + H(+). Its pathway is cell wall biogenesis; peptidoglycan biosynthesis. Catalyzes the addition of meso-diaminopimelic acid to the nucleotide precursor UDP-N-acetylmuramoyl-L-alanyl-D-glutamate (UMAG) in the biosynthesis of bacterial cell-wall peptidoglycan. The sequence is that of UDP-N-acetylmuramoyl-L-alanyl-D-glutamate--2,6-diaminopimelate ligase from Histophilus somni (strain 129Pt) (Haemophilus somnus).